A 714-amino-acid chain; its full sequence is MPMPPQCASSKPPSPPPPPHPHEHEVGDDMAEEAPPPPPPPKLLYIAVSDAAARRAFRYTRPVLQGTLQLMGCKARHAFKISKRVFNVMRSEFLDASKSDTADNEENAPSLVKDVEMLKPKILEATLSSIPFELYKTQTTIVVSREKFLSVVCDALSSYKYVGPNQKADFLLACRIKERKESVTVLLCGTSGCGKSTLSSLLGSRLGITTVVSTDSIRHMMRGFTDEKQNPLLYASTYHAGECLDPVAVAQAKAKRKAQKLDIVSHPNTNEGRDDTSDDKAHHGSSELPPRTELIGSKQMAIEGFKAQSEMVIDSLDRLITSWEEQKQSVIVEGVHLSLNFVMGLMKKHPSIIPFMVYIANEEKHMERFAVRAKYMTLDPAKNRYIKYIRNIRAIQDYLCNRADKHLVPKINNTNVDQSVAAIHATVFSCLRRREAGEQLYDLNTNTVAVVNEEYRNQRAANSLGSKGMFQLIQRQGSSRNLMAILNTDGSVTKAWHVDKNNGNGSLDGTSSDKSTKNPMYDTFGKAEPVNLQFGSFGISAWMSDTGGTSHTGSVDDLRADGIETGGRYYSSCCSSPKVSDCPSKELMEDDYSVFGSEEDADDPPDAGTDEDLTDEERDMHEIEAGSVDEHSTKSDEEYDDLAMQDVMENGYWSDDEQAASSTKNSSNQEKNIHGAADGDVVDDEGSGNDRFHHNLAFFLKMSKKVAATELPCA.

The span at 1 to 11 (MPMPPQCASSK) shows a compositional bias: low complexity. Disordered stretches follow at residues 1–42 (MPMP…PPPK), 259–293 (QKLDIVSHPNTNEGRDDTSDDKAHHGSSELPPRTE), and 595–689 (FGSE…GSGN). The segment covering 271-285 (EGRDDTSDDKAHHGS) has biased composition (basic and acidic residues). The segment covering 595 to 617 (FGSEEDADDPPDAGTDEDLTDEE) has biased composition (acidic residues). The span at 618–636 (RDMHEIEAGSVDEHSTKSD) shows a compositional bias: basic and acidic residues. Residues 659–670 (AASSTKNSSNQE) are compositionally biased toward polar residues.

Expressed in roots, leaf blade shoots, leaf sheath shoots and panicles.

In terms of biological role, required for the accumulation of phytic acid in seeds. Phytic acid is the primary storage form of phosphorus in cereal grains and other plant seeds. In Oryza sativa subsp. japonica (Rice), this protein is P-loop NTPase domain-containing protein LPA1.